A 427-amino-acid polypeptide reads, in one-letter code: 3-isopropylmalate dehydratase large subunit (427 aa).

[4Fe-4S] cluster-binding residues include Cys-308, Cys-368, and Cys-371.

It belongs to the aconitase/IPM isomerase family. LeuC type 2 subfamily. In terms of assembly, heterodimer of LeuC and LeuD. It depends on [4Fe-4S] cluster as a cofactor.

The catalysed reaction is (2R,3S)-3-isopropylmalate = (2S)-2-isopropylmalate. It participates in amino-acid biosynthesis; L-leucine biosynthesis; L-leucine from 3-methyl-2-oxobutanoate: step 2/4. Its function is as follows. Catalyzes the isomerization between 2-isopropylmalate and 3-isopropylmalate, via the formation of 2-isopropylmaleate. This chain is 3-isopropylmalate dehydratase large subunit, found in Geotalea uraniireducens (strain Rf4) (Geobacter uraniireducens).